The sequence spans 354 residues: Rhodopsin (354 aa).

At 1-36 (MNGTEGENFYVPMSNKTGVVRSPFDYPQYYLGEPWM) the chain is on the extracellular side. Asparagine 2 and asparagine 15 each carry an N-linked (GlcNAc...) asparagine glycan. A helical transmembrane segment spans residues 37 to 61 (FSALAAYMFFLILTGLPVNFLTLFV). Over 62–73 (TIQHKKLRQPLN) the chain is Cytoplasmic. Residues 74–96 (YILLNLAVSDLFMVFGGFTTTII) form a helical membrane-spanning segment. At 97–110 (TSMNGYFIFGPAGC) the chain is on the extracellular side. A disulfide bridge connects residues cysteine 110 and cysteine 187. The helical transmembrane segment at 111-133 (NFEGFFATLGGEVGLWCLVVLAI) threads the bilayer. Positions 134–136 (ERY) match the 'Ionic lock' involved in activated form stabilization motif. Residues 134–152 (ERYMVVCKPMANFRFGSQH) are Cytoplasmic-facing. Residues 153–173 (AIIGVVFTWIMALSCAGPPLV) form a helical membrane-spanning segment. At 174 to 202 (GWSRYIPEGLQCSCGVDYYTMKPEVNNES) the chain is on the extracellular side. Residues 203-224 (FVIYMFVVHFTIPLIVIFFCYG) form a helical membrane-spanning segment. Topologically, residues 225–252 (RLVCTVKEAAAQQQESESTQRAEREVTR) are cytoplasmic. A helical transmembrane segment spans residues 253–274 (MVIIMVVAFLICWVPYASVAFY). At 275–286 (IFINQGCDFTPF) the chain is on the extracellular side. Residues 287–308 (FMTVPAFFAKSSAVYNPLIYIL) form a helical membrane-spanning segment. An N6-(retinylidene)lysine modification is found at lysine 296. At 309–354 (MNKQFRNCMITTICLGKNPFEEEESTSASASKTEASSVSSSQVAPA) the chain is on the cytoplasmic side. Cysteine 322 carries the S-palmitoyl cysteine lipid modification. Residues 333–354 (STSASASKTEASSVSSSQVAPA) form a disordered region. Low complexity predominate over residues 334–354 (TSASASKTEASSVSSSQVAPA).

This sequence belongs to the G-protein coupled receptor 1 family. Opsin subfamily. Post-translationally, phosphorylated on some or all of the serine and threonine residues present in the C-terminal region. Contains one covalently linked retinal chromophore.

It is found in the membrane. Its subcellular location is the cell projection. The protein resides in the cilium. The protein localises to the photoreceptor outer segment. Its function is as follows. Photoreceptor required for image-forming vision at low light intensity. While most salt water fish species use retinal as chromophore, most freshwater fish use 3-dehydroretinal, or a mixture of retinal and 3-dehydroretinal. Light-induced isomerization of 11-cis to all-trans retinal triggers a conformational change that activates signaling via G-proteins. Subsequent receptor phosphorylation mediates displacement of the bound G-protein alpha subunit by arrestin and terminates signaling. This Leucoraja erinaceus (Little skate) protein is Rhodopsin (rho).